The chain runs to 371 residues: ETS-related transcription factor Elf-3 (371 aa).

A PNT domain is found at 46 to 132 (NPQMSLEGTE…AQLRDLTSSS (87 aa)). Positions 137–145 (SWIIELLEK) match the 9aaTAD motif. Residues 173–251 (GQQASPYHPG…HGKRKRGRPR (79 aa)) are disordered. Low complexity predominate over residues 181–216 (PGSCGAGAPSPGSSDVSTAGTGASRSSHSSDSGGSD). A compositionally biased stretch (basic and acidic residues) spans 231–241 (GFRDCKKGDPK). Residues 242–251 (HGKRKRGRPR) are compositionally biased toward basic residues. Residues 273 to 355 (THLWEFIRDI…DGRRLVYKFG (83 aa)) constitute a DNA-binding region (ETS).

It belongs to the ETS family. In terms of assembly, interacts with TBP. Interacts with CREBBP and EP300; these act as transcriptional coactivators of ELF3 and positively modulate its function. Interacts with XRCC5/KU86 and XRCC6/KU70; these inhibit the ability of ELF3 to bind DNA and negatively modulate its transcriptional activity. Associated with CLND7 and POU2F3. Interacts with ZNF768. In terms of tissue distribution, expressed exclusively in tissues containing a high content of terminally differentiated epithelial cells including mammary gland, colon, trachea, kidney, prostate, uterus, stomach and skin.

The protein resides in the cytoplasm. The protein localises to the nucleus. Transcriptional activator that binds and transactivates ETS sequences containing the consensus nucleotide core sequence GGA[AT]. Acts synergistically with POU2F3 to transactivate the SPRR2A promoter and with RUNX1 to transactivate the ANGPT1 promoter. Also transactivates collagenase, CCL20, CLND7, FLG, KRT8, NOS2, PTGS2, SPRR2B, TGFBR2 and TGM3 promoters. Represses KRT4 promoter activity. Involved in mediating vascular inflammation. May play an important role in epithelial cell differentiation and tumorigenesis. May be a critical downstream effector of the ERBB2 signaling pathway. May be associated with mammary gland development and involution. Plays an important role in the regulation of transcription with TATA-less promoters in preimplantation embryos, which is essential in preimplantation development. In Homo sapiens (Human), this protein is ETS-related transcription factor Elf-3.